Reading from the N-terminus, the 1678-residue chain is Clathrin heavy chain (1678 aa).

WD40-like repeat stretches follow at residues 24–67 (SFSF…RPIS), 68–107 (ADSA…MNED), 108–149 (VVFW…SSLN), 150–195 (GCQI…QAIE), 196–257 (GHAA…PEAQ), 258–301 (NDFP…ISAD), and 302–330 (TIFV…VTVD). CHCR repeat units lie at residues 538–684 (VAEE…QICV), 687–829 (ATKY…SEDI), 834–973 (ILVV…QLID), 980–1125 (LSET…VKEA), 1129–1270 (YIKA…FRLA), 1275–1421 (LHIV…LLLN), and 1424–1567 (LLVL…YDCF). Residues 1334-1643 (REHLELFWSR…IQMEPQLMIT (310 aa)) form an involved in binding clathrin light chain region. Residues 1552–1677 (EELLGWFLER…AGGRNMGYPY (126 aa)) are trimerization.

The protein belongs to the clathrin heavy chain family. Clathrin triskelions, composed of 3 heavy chains and 3 light chains, are the basic subunits of the clathrin coat. Interacts with sau.

It is found in the cytoplasmic vesicle membrane. Its subcellular location is the membrane. The protein localises to the coated pit. Clathrin is the major protein of the polyhedral coat of coated pits and vesicles. This Drosophila melanogaster (Fruit fly) protein is Clathrin heavy chain (Chc).